Here is a 185-residue protein sequence, read N- to C-terminus: Ribosome-recycling factor (185 aa).

Belongs to the RRF family.

It localises to the cytoplasm. Its function is as follows. Responsible for the release of ribosomes from messenger RNA at the termination of protein biosynthesis. May increase the efficiency of translation by recycling ribosomes from one round of translation to another. This Corynebacterium jeikeium (strain K411) protein is Ribosome-recycling factor.